The primary structure comprises 196 residues: Large ribosomal subunit protein bL9 (196 aa).

The interval 174 to 196 is disordered; sequence QAAADLLEGGAGQQASEYTEAQA. Positions 186–196 are enriched in polar residues; sequence QQASEYTEAQA.

This sequence belongs to the bacterial ribosomal protein bL9 family.

Binds to the 23S rRNA. The protein is Large ribosomal subunit protein bL9 of Phenylobacterium zucineum (strain HLK1).